A 715-amino-acid chain; its full sequence is ATP-binding cassette sub-family B member 10, mitochondrial (715 aa).

A mitochondrion-targeting transit peptide spans 1 to 82 (MRAPSARALL…SSGARRCWVL (82 aa)). Residues 83 to 133 (AGPRAAHPLFARLQGAAATGVRDLGNDSQRRPAATGRSEVWKLLGLVRPER) lie on the Mitochondrial matrix side of the membrane. A helical membrane pass occupies residues 134–157 (GRLSAAVGFLAVSSVITMSAPFFL). Residues 136–422 (LSAAVGFLAV…LSSFYSELMK (287 aa)) enclose the ABC transmembrane type-1 domain. Over 158–178 (GRIIDVIYTNPSEGYGDSLTR) the chain is Mitochondrial intermembrane. Residues 179-201 (LCAVLTCVFLCGAAANGIRVYLM) form a helical membrane-spanning segment. At 202 to 252 (QSSGQSIVNRLRTSLFSSILRQEVAFFDKTRTGELINRLSSDTALLGRSVT) the chain is on the mitochondrial matrix side. At K230 the chain carries N6-acetyllysine. A helical membrane pass occupies residues 253–275 (ENLSDGLRAGAQASVGVGMMFFV). The Mitochondrial intermembrane segment spans residues 276-278 (SPS). A helical membrane pass occupies residues 279–298 (LATFVLSVVPPISVLAVIYG). Residues 299–357 (RYLRKLSKATQDSLAEATQLAEERIGNIRTIRAFGKEMTEVEKYTGRVDQLLQLAQKEA) are Mitochondrial matrix-facing. Residues 358 to 381 (LARAGFFGAAGLSGNLIVLSVLYK) form a helical membrane-spanning segment. Residues 382-395 (GGLLMGSAHMTVGE) are Mitochondrial intermembrane-facing. The helical transmembrane segment at 396–417 (LSSFLMYAFWVGLSIGGLSSFY) threads the bilayer. Residues 418–715 (SELMKGLGAG…AEQFLEPARA (298 aa)) are Mitochondrial matrix-facing. The ABC transporter domain occupies 457-696 (LEFRNVHFTY…PNGLYRKLMN (240 aa)). The ATP site is built by G495, G497, K498, S499, and T500. S499 is a binding site for Mg(2+). Position 547 is an S-glutathionyl cysteine (C547). Residue D623 coordinates Mg(2+).

It belongs to the ABC transporter superfamily. ABCB family. Mitochondrial peptide exporter (TC 3.A.1.212) subfamily. As to quaternary structure, homodimer or homooligomer. Interacts with PAAT; this interaction regulates ABCB10. Interacts with SLC25A37; this interaction stabilizes SLC25A37 and enhances the function of SLC25A37 to import mitochondrial iron during erythroid differentiation. Interacts with FECH; this interaction may allow the formation of the oligomeric complex with SLC25A37. Forms a complex with ABCB7 and FECH, where a dimeric FECH bridges ABCB7 and ABCB10 homodimers; this complex may be required for cellular iron homeostasis, mitochondrial function and heme biosynthesis. Expressed at particularly high levels in fetal liver, and erythroid tissues of embryos and adults. Found also in adult bone marrow, liver and kidney, and at lower levels in heart, brain and spleen.

The protein resides in the mitochondrion inner membrane. The catalysed reaction is biliverdin IXalpha(in) + ATP + H2O = biliverdin IXalpha(out) + ADP + phosphate + H(+). With respect to regulation, oxidized glutathione (GSSG) stimulates ATP hydrolysis without affecting ATP binding, whereas reduced glutathione (GSH) inhibits ATP binding and hydrolysis. In terms of biological role, ATP-dependent transporter located in the mitochondrial inner membrane that catalyzes the export of biliverdin from the mitochondrial matrix, and plays a crucial role in hemoglobin synthesis and antioxidative stress. Participates in the early step of the heme biosynthetic process during insertion of iron into protoporphyrin IX (PPIX). Involved in the stabilization of the iron transporter mitoferrin-1/SLC25A37. In addition may be involved in mitochondrial unfolded protein response (UPRmt) signaling pathway, although ABCB10 probably does not participate in peptide export from mitochondria. This is ATP-binding cassette sub-family B member 10, mitochondrial from Mus musculus (Mouse).